The sequence spans 1373 residues: DNA-directed RNA polymerase subunit beta (1373 aa).

Belongs to the RNA polymerase beta chain family. The RNAP catalytic core consists of 2 alpha, 1 beta, 1 beta' and 1 omega subunit. When a sigma factor is associated with the core the holoenzyme is formed, which can initiate transcription.

The catalysed reaction is RNA(n) + a ribonucleoside 5'-triphosphate = RNA(n+1) + diphosphate. In terms of biological role, DNA-dependent RNA polymerase catalyzes the transcription of DNA into RNA using the four ribonucleoside triphosphates as substrates. The protein is DNA-directed RNA polymerase subunit beta of Rickettsia peacockii (strain Rustic).